Consider the following 492-residue polypeptide: MTTQHSKTDVILIGGGIMSATLGTLLKELSPEKNIKVFEKLAQPGEESSNVWNNAGTGHSALCELNYTKEGKDGTVDCSKAIKINEQYQISKQFWAYLVKTGQLDNPDRFIQAVPHMSFVIGEDNVAFIKSRVATLKKNVLFEKMKLSQDEEEMKSWVPLMIEGRKSDEPIALTYDETGTDVNFGALTAKLFDNLEQRGVEIQYKQNVLDIKKQKSGAWLVKVKDLETNETTTYESDFVFIGAGGASLPLLQKTGIKQSKHIGGFPVSGLFLRCTNQEVIDRHHAKVYGKAAVGAPPMSVPHLDTRFVDGKRSLLFGPFAGFSPKFLKTGSHMDLIKSVKPNNIVTMLSAGIKEMSLTKYLVSQLMLSNDERMDDLRVFFPNAKNEDWEVITAGQRVQVIKDTEDSKGNLQFGTEVITSDDGTLAALLGASPGASTAVDIMFDVLQRCYRDEFKGWEPKIKEMVPSFGYRLTDHEDLYHKINEEVTKYLQVK.

It belongs to the MQO family. FAD serves as cofactor.

The catalysed reaction is (S)-malate + a quinone = a quinol + oxaloacetate. Its pathway is carbohydrate metabolism; tricarboxylic acid cycle; oxaloacetate from (S)-malate (quinone route): step 1/1. The protein is Probable malate:quinone oxidoreductase 1 of Staphylococcus aureus (strain MRSA252).